A 277-amino-acid chain; its full sequence is Small ribosomal subunit protein uS5 (277 aa).

The disordered stretch occupies residues A18 to A40. Positions P29–A40 are enriched in basic and acidic residues. The region spanning L87–V150 is the S5 DRBM domain.

The protein belongs to the universal ribosomal protein uS5 family. Component of the small ribosomal subunit.

The protein localises to the cytoplasm. It localises to the nucleus. The protein resides in the nucleolus. Functionally, component of the ribosome, a large ribonucleoprotein complex responsible for the synthesis of proteins in the cell. The small ribosomal subunit (SSU) binds messenger RNAs (mRNAs) and translates the encoded message by selecting cognate aminoacyl-transfer RNA (tRNA) molecules. The large subunit (LSU) contains the ribosomal catalytic site termed the peptidyl transferase center (PTC), which catalyzes the formation of peptide bonds, thereby polymerizing the amino acids delivered by tRNAs into a polypeptide chain. The nascent polypeptides leave the ribosome through a tunnel in the LSU and interact with protein factors that function in enzymatic processing, targeting, and the membrane insertion of nascent chains at the exit of the ribosomal tunnel. Plays a role in the assembly and function of the 40S ribosomal subunit. Mutations in this protein affects the control of translational fidelity. Involved in nucleolar processing of pre-18S ribosomal RNA and ribosome assembly. This chain is Small ribosomal subunit protein uS5 (rps2), found in Ictalurus punctatus (Channel catfish).